The sequence spans 696 residues: Polyribonucleotide nucleotidyltransferase (696 aa).

Mg(2+) contacts are provided by D486 and D492. Positions 553-612 (PRIIVRNIPKDRIGELIGPGGKNVRGISELTGAELYIEDDGRVTISGSNQESAEKAAKMV) constitute a KH domain. Residues 622–690 (GKIYEGKVKR…KTGKIDLSRK (69 aa)) form the S1 motif domain.

This sequence belongs to the polyribonucleotide nucleotidyltransferase family. It depends on Mg(2+) as a cofactor.

The protein resides in the cytoplasm. It catalyses the reaction RNA(n+1) + phosphate = RNA(n) + a ribonucleoside 5'-diphosphate. In terms of biological role, involved in mRNA degradation. Catalyzes the phosphorolysis of single-stranded polyribonucleotides processively in the 3'- to 5'-direction. The chain is Polyribonucleotide nucleotidyltransferase from Leptospira borgpetersenii serovar Hardjo-bovis (strain L550).